Here is a 326-residue protein sequence, read N- to C-terminus: UDP-3-O-acylglucosamine N-acyltransferase (326 aa).

The active-site Proton acceptor is H225.

The protein belongs to the transferase hexapeptide repeat family. LpxD subfamily. In terms of assembly, homotrimer.

The catalysed reaction is a UDP-3-O-[(3R)-3-hydroxyacyl]-alpha-D-glucosamine + a (3R)-hydroxyacyl-[ACP] = a UDP-2-N,3-O-bis[(3R)-3-hydroxyacyl]-alpha-D-glucosamine + holo-[ACP] + H(+). The protein operates within bacterial outer membrane biogenesis; LPS lipid A biosynthesis. Functionally, catalyzes the N-acylation of UDP-3-O-acylglucosamine using 3-hydroxyacyl-ACP as the acyl donor. Is involved in the biosynthesis of lipid A, a phosphorylated glycolipid that anchors the lipopolysaccharide to the outer membrane of the cell. The sequence is that of UDP-3-O-acylglucosamine N-acyltransferase from Verminephrobacter eiseniae (strain EF01-2).